The chain runs to 324 residues: Methionyl-tRNA formyltransferase (324 aa).

114–117 is a binding site for (6S)-5,6,7,8-tetrahydrofolate; it reads SLLP.

Belongs to the Fmt family.

The enzyme catalyses L-methionyl-tRNA(fMet) + (6R)-10-formyltetrahydrofolate = N-formyl-L-methionyl-tRNA(fMet) + (6S)-5,6,7,8-tetrahydrofolate + H(+). In terms of biological role, attaches a formyl group to the free amino group of methionyl-tRNA(fMet). The formyl group appears to play a dual role in the initiator identity of N-formylmethionyl-tRNA by promoting its recognition by IF2 and preventing the misappropriation of this tRNA by the elongation apparatus. This Parabacteroides distasonis (strain ATCC 8503 / DSM 20701 / CIP 104284 / JCM 5825 / NCTC 11152) protein is Methionyl-tRNA formyltransferase.